The sequence spans 189 residues: Ribonuclease M5 (189 aa).

The Toprim domain maps to 8–91 (KEIIVVEGKD…AFLPKEEALA (84 aa)). Mg(2+)-binding residues include E14, D60, and D62.

This sequence belongs to the ribonuclease M5 family. Mg(2+) is required as a cofactor.

Its subcellular location is the cytoplasm. The enzyme catalyses Endonucleolytic cleavage of RNA, removing 21 and 42 nucleotides, respectively, from the 5'- and 3'-termini of a 5S-rRNA precursor.. Functionally, required for correct processing of both the 5' and 3' ends of 5S rRNA precursor. Cleaves both sides of a double-stranded region yielding mature 5S rRNA in one step. The protein is Ribonuclease M5 of Bacillus cereus (strain ATCC 14579 / DSM 31 / CCUG 7414 / JCM 2152 / NBRC 15305 / NCIMB 9373 / NCTC 2599 / NRRL B-3711).